Consider the following 470-residue polypeptide: Acetyl-CoA decarbonylase/synthase complex subunit gamma 1 (470 aa).

One can recognise a 4Fe-4S domain in the interval 1-60; that stretch reads MKINSPLEAYKYLPQTNCGECGQPTCMAFASTLIDRSGKTTDCPPLIKEKKFAKKLAELD. [4Fe-4S] cluster contacts are provided by Cys-18, Cys-21, Cys-26, and Cys-43.

Heterodimer of delta and gamma chains. The ACDS complex is made up of alpha, epsilon, beta, gamma and delta chains with a probable stoichiometry of (alpha(2)epsilon(2))(4)-beta(8)-(gamma(1)delta(1))(8). Corrinoid is required as a cofactor. Requires [4Fe-4S] cluster as cofactor.

The enzyme catalyses 5,6,7,8-tetrahydrosarcinapterin + methyl-Co(III)-[corrinoid Fe-S protein] = 5-methyltetrahydrosarcinapterin + Co(I)-[corrinoid Fe-S protein] + H(+). It functions in the pathway one-carbon metabolism; methanogenesis from acetate. In terms of biological role, part of a complex that catalyzes the reversible cleavage of acetyl-CoA, allowing growth on acetate as sole source of carbon and energy. This chain is Acetyl-CoA decarbonylase/synthase complex subunit gamma 1, found in Methanosarcina mazei (strain ATCC BAA-159 / DSM 3647 / Goe1 / Go1 / JCM 11833 / OCM 88) (Methanosarcina frisia).